Here is a 533-residue protein sequence, read N- to C-terminus: T-complex protein 1 subunit delta (533 aa).

A compositionally biased stretch (polar residues) spans M1 to T15. Residues M1–V25 form a disordered region. Residues F16–V25 show a composition bias toward basic and acidic residues.

This sequence belongs to the TCP-1 chaperonin family. As to quaternary structure, heterooligomeric complex of about 850 to 900 kDa that forms two stacked rings, 12 to 16 nm in diameter.

Its subcellular location is the cytoplasm. Molecular chaperone; assists the folding of proteins upon ATP hydrolysis. Known to play a role, in vitro, in the folding of actin and tubulin. In Debaryomyces hansenii (strain ATCC 36239 / CBS 767 / BCRC 21394 / JCM 1990 / NBRC 0083 / IGC 2968) (Yeast), this protein is T-complex protein 1 subunit delta (CCT4).